A 635-amino-acid chain; its full sequence is 1-deoxy-D-xylulose-5-phosphate synthase (635 aa).

Residues histidine 77 and 118–120 (GHA) contribute to the thiamine diphosphate site. Aspartate 149 serves as a coordination point for Mg(2+). Thiamine diphosphate contacts are provided by residues 150–151 (GS), asparagine 178, phenylalanine 290, and glutamate 375. Residue asparagine 178 participates in Mg(2+) binding.

It belongs to the transketolase family. DXPS subfamily. Homodimer. It depends on Mg(2+) as a cofactor. Requires thiamine diphosphate as cofactor.

The catalysed reaction is D-glyceraldehyde 3-phosphate + pyruvate + H(+) = 1-deoxy-D-xylulose 5-phosphate + CO2. The protein operates within metabolic intermediate biosynthesis; 1-deoxy-D-xylulose 5-phosphate biosynthesis; 1-deoxy-D-xylulose 5-phosphate from D-glyceraldehyde 3-phosphate and pyruvate: step 1/1. Catalyzes the acyloin condensation reaction between C atoms 2 and 3 of pyruvate and glyceraldehyde 3-phosphate to yield 1-deoxy-D-xylulose-5-phosphate (DXP). This chain is 1-deoxy-D-xylulose-5-phosphate synthase, found in Chlorobium phaeovibrioides (strain DSM 265 / 1930) (Prosthecochloris vibrioformis (strain DSM 265)).